The sequence spans 281 residues: Putative phosphatase/phosphodiesterase MG246 (281 aa).

4 residues coordinate Fe cation: aspartate 11, glutamate 42, asparagine 43, and asparagine 70. Histidine 71 serves as the catalytic Proton donor. Histidine 157, histidine 182, and histidine 184 together coordinate Fe cation.

Belongs to the YmdB-like family. Fe(3+) is required as a cofactor.

In Mycoplasma genitalium (strain ATCC 33530 / DSM 19775 / NCTC 10195 / G37) (Mycoplasmoides genitalium), this protein is Putative phosphatase/phosphodiesterase MG246.